A 227-amino-acid polypeptide reads, in one-letter code: Putative molybdenum transport system permease protein YvgM (227 aa).

A run of 5 helical transmembrane segments spans residues 17–37, 57–77, 94–114, 142–162, and 201–221; these read VVLSFQVAAVAGIVVIILGTL, FMLPLVLPPTVVGFILIVIFG, VIFTWWAAVIASAVVAFPLMY, VFIHISVPLAYPSLLTGSILS, and TLAWAWVVCIVVISFLMLFFI. Positions 17–221 constitute an ABC transmembrane type-1 domain; sequence VVLSFQVAAV…VISFLMLFFI (205 aa).

This sequence belongs to the binding-protein-dependent transport system permease family. CysTW subfamily.

It is found in the cell membrane. In terms of biological role, could be part of the binding-protein-dependent transport system for molybdenum; probably responsible for the translocation of the substrate across the membrane. This Bacillus subtilis (strain 168) protein is Putative molybdenum transport system permease protein YvgM (yvgM).